We begin with the raw amino-acid sequence, 714 residues long: Ribonucleoside-diphosphate reductase 2 subunit alpha (714 aa).

Substrate-binding positions include Thr-161, Ser-177–Cys-178, Gly-206, Asn-386–Glu-390, and Pro-588–Ile-592. Cysteines 178 and 415 form a disulfide. Residue Asn-386 is the Proton acceptor of the active site. Residue Cys-388 is the Cysteine radical intermediate of the active site. Glu-390 serves as the catalytic Proton acceptor.

It belongs to the ribonucleoside diphosphate reductase large chain family. As to quaternary structure, tetramer of two alpha and two beta subunits.

It carries out the reaction a 2'-deoxyribonucleoside 5'-diphosphate + [thioredoxin]-disulfide + H2O = a ribonucleoside 5'-diphosphate + [thioredoxin]-dithiol. Under complex allosteric control mediated by deoxynucleoside triphosphates and ATP binding. The type of nucleotide bound at the specificity site determines substrate preference. It seems probable that ATP makes the enzyme reduce CDP and UDP, dGTP favors ADP reduction and dTTP favors GDP reduction. Functionally, provides the precursors necessary for DNA synthesis. Catalyzes the biosynthesis of deoxyribonucleotides from the corresponding ribonucleotides. R1E contains the binding sites for both substrates and allosteric effectors and carries out the actual reduction of the ribonucleotide. In Escherichia coli (strain K12), this protein is Ribonucleoside-diphosphate reductase 2 subunit alpha (nrdE).